The following is a 952-amino-acid chain: 2-oxoglutarate dehydrogenase E1 component (952 aa).

The protein belongs to the alpha-ketoglutarate dehydrogenase family. As to quaternary structure, homodimer. Part of the 2-oxoglutarate dehydrogenase (OGDH) complex composed of E1 (2-oxoglutarate dehydrogenase), E2 (dihydrolipoamide succinyltransferase) and E3 (dihydrolipoamide dehydrogenase); the complex contains multiple copies of the three enzymatic components (E1, E2 and E3). Thiamine diphosphate is required as a cofactor.

It catalyses the reaction N(6)-[(R)-lipoyl]-L-lysyl-[protein] + 2-oxoglutarate + H(+) = N(6)-[(R)-S(8)-succinyldihydrolipoyl]-L-lysyl-[protein] + CO2. Its function is as follows. E1 component of the 2-oxoglutarate dehydrogenase (OGDH) complex which catalyzes the decarboxylation of 2-oxoglutarate, the first step in the conversion of 2-oxoglutarate to succinyl-CoA and CO(2). The chain is 2-oxoglutarate dehydrogenase E1 component from Geobacillus sp. (strain WCH70).